A 219-amino-acid chain; its full sequence is MGQPRAIGIIPDGNRRWASLRGENLYIAYYTGYRNVKRILTYIRDFYPAIRSVYLYVLSRDNCSKRSRAELSILYRIMRRSIERDIAEIEKGGASLVIVGDINHPNLPDNIRESLAPYHFDMYLKKGSLPDGRRVVAGLCYDPFWEIEHYTPKTLPSRLLDEIDLVIRTGGEKRLSSFFPLLTRYAELYFIDKLWPDFTREDLDRAVQWFSTRRRPMGR.

D12 is a catalytic residue. Mg(2+) is bound at residue D12. Substrate contacts are provided by residues 13-16 (GNRR), W17, and 59-61 (SRD). Residue N62 is the Proton acceptor of the active site. Substrate is bound by residues R66, R168, and 174-176 (RLS). Residue E187 participates in Mg(2+) binding.

It belongs to the UPP synthase family. As to quaternary structure, homodimer. Mg(2+) serves as cofactor.

It carries out the reaction geranylgeranyl diphosphate + 7 isopentenyl diphosphate = tri-trans,hepta-cis-undecaprenyl diphosphate + 7 diphosphate. In terms of biological role, catalyzes the sequential condensation of isopentenyl diphosphate (IPP) with geranylgeranyl diphosphate (GGPP) to yield (2Z,6Z,10Z,14Z,18Z,22Z,26Z,30E,34E,38E)-undecaprenyl diphosphate (tritrans,heptacis-UPP). It is probably the precursor of glycosyl carrier lipids. The protein is Tritrans,polycis-undecaprenyl-diphosphate synthase (geranylgeranyl-diphosphate specific) of Aeropyrum pernix (strain ATCC 700893 / DSM 11879 / JCM 9820 / NBRC 100138 / K1).